A 349-amino-acid chain; its full sequence is 2-oxoglutarate-Fe(II) type oxidoreductase hxnY (349 aa).

A Fe2OG dioxygenase domain is found at 178 to 282 (GVATMRMLHY…RYSIPFFFSG (105 aa)). Residues H205, D207, and H263 each contribute to the Fe cation site. R273 contributes to the 2-oxoglutarate binding site.

This sequence belongs to the iron/ascorbate-dependent oxidoreductase family. The cofactor is Fe(2+).

In terms of biological role, 2-oxoglutarate-Fe(II) type oxidoreductase, part of the hnx cluster involved in the purine degradation. The nicotinate hydroxylase hnxS accepts nicotinate as a substrate and catalyzes the first step of nicotinate catabolism. The major facilitator-type transporters hxnP and hxnZ are probably involved in the uptake of nicotinate-derived metabolites, and the oxidoreductases hxnT and hxnY in the further metabolism of 6-OH nicotinic acid. The sequence is that of 2-oxoglutarate-Fe(II) type oxidoreductase hxnY from Emericella nidulans (strain FGSC A4 / ATCC 38163 / CBS 112.46 / NRRL 194 / M139) (Aspergillus nidulans).